A 321-amino-acid chain; its full sequence is MNQTLNSSGTVESALNYSRGSTVHTAYLVLSSLAMFTCLCGMAGNSMVIWLLGFRMHRNPFCIYILNLAAADLLFLFSMASTLSLETQPLVNTTDKVHELMKRLMYFAYTVGLSLLTAISTQRCLSVLFPIWFKCHRPRHLSAWVCGLLWTLCLLMNGLTSSFCSKFLKFNEDRCFRVDMVQAALIMGVLTPVMTLSSLTLFVWVRRSSQQWRRQPTRLFVVVLASVLVFLICSLPLSIYWFVLYWLSLPPEMQVLCFSLSRLSSSVSSSANPVIYFLVGSRRSHRLPTRSLGTVLQQALREEPELEGGETPTVGTNEMGA.

At 1-33 (MNQTLNSSGTVESALNYSRGSTVHTAYLVLSSL) the chain is on the extracellular side. 3 N-linked (GlcNAc...) asparagine glycosylation sites follow: Asn-2, Asn-6, and Asn-16. A helical transmembrane segment spans residues 34 to 54 (AMFTCLCGMAGNSMVIWLLGF). The Cytoplasmic portion of the chain corresponds to 55 to 59 (RMHRN). A helical transmembrane segment spans residues 60–80 (PFCIYILNLAAADLLFLFSMA). At 81-112 (STLSLETQPLVNTTDKVHELMKRLMYFAYTVG) the chain is on the extracellular side. Residue Asn-92 is glycosylated (N-linked (GlcNAc...) asparagine). Residues 113 to 133 (LSLLTAISTQRCLSVLFPIWF) traverse the membrane as a helical segment. At 134 to 142 (KCHRPRHLS) the chain is on the cytoplasmic side. Residues 143-163 (AWVCGLLWTLCLLMNGLTSSF) form a helical membrane-spanning segment. The Extracellular portion of the chain corresponds to 164–184 (CSKFLKFNEDRCFRVDMVQAA). Residues 185-205 (LIMGVLTPVMTLSSLTLFVWV) form a helical membrane-spanning segment. The Cytoplasmic segment spans residues 206 to 218 (RRSSQQWRRQPTR). A helical membrane pass occupies residues 219–239 (LFVVVLASVLVFLICSLPLSI). The Extracellular segment spans residues 240–257 (YWFVLYWLSLPPEMQVLC). The chain crosses the membrane as a helical span at residues 258-280 (FSLSRLSSSVSSSANPVIYFLVG). The Cytoplasmic portion of the chain corresponds to 281–321 (SRRSHRLPTRSLGTVLQQALREEPELEGGETPTVGTNEMGA). The tract at residues 302 to 321 (EEPELEGGETPTVGTNEMGA) is disordered.

It belongs to the G-protein coupled receptor 1 family. Mas subfamily.

It is found in the cell membrane. In terms of biological role, may regulate nociceptor function and/or development, including the sensation or modulation of pain. Functions as a specific membrane receptor for beta-alanine. Beta-alanine at micromolar doses specifically evoked Ca(2+) influx in cells expressing the receptor. Beta-alanine decreases forskolin-stimulated cAMP production in cells expressing the receptor, suggesting that the receptor couples with G-protein G(q) and G(i). The polypeptide is Mas-related G-protein coupled receptor member D (MRGPRD) (Homo sapiens (Human)).